Consider the following 133-residue polypeptide: Small ribosomal subunit protein uS8 (133 aa).

Belongs to the universal ribosomal protein uS8 family. As to quaternary structure, part of the 30S ribosomal subunit. Contacts proteins S5 and S12.

In terms of biological role, one of the primary rRNA binding proteins, it binds directly to 16S rRNA central domain where it helps coordinate assembly of the platform of the 30S subunit. The protein is Small ribosomal subunit protein uS8 of Prochlorococcus marinus (strain SARG / CCMP1375 / SS120).